A 403-amino-acid chain; its full sequence is S-adenosylmethionine synthase (403 aa).

Histidine 17 is a binding site for ATP. Aspartate 19 is a Mg(2+) binding site. Glutamate 45 serves as a coordination point for K(+). L-methionine is bound by residues glutamate 58 and glutamine 101. The flexible loop stretch occupies residues 101–111; sequence QSPDIAMGVDR. Residues 177 to 179, 244 to 245, aspartate 253, 259 to 260, alanine 276, and lysine 280 contribute to the ATP site; these read DGK, RF, and RK. Aspartate 253 is an L-methionine binding site. An L-methionine-binding site is contributed by lysine 284.

It belongs to the AdoMet synthase family. Homotetramer; dimer of dimers. Requires Mg(2+) as cofactor. K(+) serves as cofactor.

It localises to the cytoplasm. It catalyses the reaction L-methionine + ATP + H2O = S-adenosyl-L-methionine + phosphate + diphosphate. It participates in amino-acid biosynthesis; S-adenosyl-L-methionine biosynthesis; S-adenosyl-L-methionine from L-methionine: step 1/1. In terms of biological role, catalyzes the formation of S-adenosylmethionine (AdoMet) from methionine and ATP. The overall synthetic reaction is composed of two sequential steps, AdoMet formation and the subsequent tripolyphosphate hydrolysis which occurs prior to release of AdoMet from the enzyme. The protein is S-adenosylmethionine synthase of Geobacillus kaustophilus (strain HTA426).